The primary structure comprises 513 residues: Zinc finger CCCH-type with G patch domain-containing protein (513 aa).

The C3H1-type zinc-finger motif lies at 155–178 (PCSYYLEGECRFDEAKCRFSHGAL). Over residues 252-261 (DQDEDDELSS) the composition is skewed to acidic residues. The disordered stretch occupies residues 252-283 (DQDEDDELSSEESNSSMNDNSSDEAESDMDDL). Positions 262–271 (EESNSSMNDN) are enriched in low complexity. Residues 272 to 283 (SSDEAESDMDDL) are compositionally biased toward acidic residues. The region spanning 312–358 (TRGIGSKLMEKMGYIHGTGLGSDGRGIVTPVSAQILPQGRSLDACME) is the G-patch domain. Positions 478-495 (VQMQSHKQELATLQAQER) are enriched in polar residues. The segment at 478–513 (VQMQSHKQELATLQAQERSLSKEQQTRKSKNKMFEF) is disordered. Residues 496–513 (SLSKEQQTRKSKNKMFEF) show a composition bias toward basic and acidic residues.

Its subcellular location is the nucleus. In terms of biological role, transcription repressor. The sequence is that of Zinc finger CCCH-type with G patch domain-containing protein from Drosophila melanogaster (Fruit fly).